Here is a 92-residue protein sequence, read N- to C-terminus: Small ribosomal subunit protein bS20 (92 aa).

It belongs to the bacterial ribosomal protein bS20 family.

Functionally, binds directly to 16S ribosomal RNA. The polypeptide is Small ribosomal subunit protein bS20 (Thermosipho africanus (strain TCF52B)).